The primary structure comprises 414 residues: Arrestin domain-containing protein 3 (414 aa).

Short sequence motifs (PPxY motif) lie at residues 346–349 (PPSY) and 391–394 (PPLY). The tract at residues 393 to 414 (LYSEIDPNPDQSSEDRPSCPSR) is disordered. The segment covering 405–414 (SEDRPSCPSR) has biased composition (basic and acidic residues).

This sequence belongs to the arrestin family. Interacts (via PPxY motifs) with NEDD4 (via WW domains). Interacts with ADRB2. Interacts with ADRB3. Interacts with HGS (via PPxY motifs). Does not bind TXN (thioredoxin). Interacts with ITCH.

The protein resides in the cytoplasm. Its subcellular location is the cell membrane. The protein localises to the lysosome. It localises to the endosome. It is found in the early endosome. In terms of biological role, adapter protein that plays a role in regulating cell-surface expression of adrenergic receptors and probably also other G protein-coupled receptors. Plays a role in NEDD4-mediated ubiquitination and endocytosis af activated ADRB2 and subsequent ADRB2 degradation. May recruit NEDD4 to ADRB2. Alternatively, may function as adapter protein that does not play a major role in recruiting NEDD4 to ADRB2, but rather plays a role in a targeting ADRB2 to endosomes. In Rattus norvegicus (Rat), this protein is Arrestin domain-containing protein 3 (Arrdc3).